A 375-amino-acid chain; its full sequence is Putrescine N-methyltransferase 1 (375 aa).

Polar residues-rich tracts occupy residues 24–50 (HQNG…QNGT) and 57–77 (HQNG…GNEL). A disordered region spans residues 24-77 (HQNGTSEHLNGYQNGTSKHQNGHQNGTFEHRNGHQNGTSEQQNGTISHDNGNEL). Residues 86-323 (PGWFSEFSAL…GVIGYMLCST (238 aa)) enclose the PABS domain. Residues Q117, E192, and 223 to 224 (DG) contribute to the S-adenosyl-L-methionine site. D242 (proton acceptor) is an active-site residue. Y311 contacts S-adenosyl-L-methionine.

This sequence belongs to the class I-like SAM-binding methyltransferase superfamily. Putrescine methyltransferase family. Predominantly expressed in roots.

It carries out the reaction putrescine + S-adenosyl-L-methionine = N-methylputrescine + S-adenosyl-L-homocysteine + H(+). It functions in the pathway alkaloid biosynthesis; nicotine biosynthesis. Its function is as follows. Involved in the biosynthesis of pyridine alkaloid natural products, leading mainly to the production of anabasine, anatabine, nicotine and nornicotine, effective deterrents against herbivores with antiparasitic and pesticide properties (neurotoxins); nornicotine serves as the precursor in the synthesis of the carcinogen compound N'-nitrosonornicotine (NNN). Methyltransferase that mediates the conversion of putrescine to N-methylputrescine. Promotes leaves ripening. The protein is Putrescine N-methyltransferase 1 of Nicotiana tabacum (Common tobacco).